Consider the following 143-residue polypeptide: UPF0299 membrane protein CGSHiEE_04225 (143 aa).

4 helical membrane passes run 1 to 21, 33 to 52, 60 to 80, and 92 to 112; these read MIQKLFLLVRSLVILSIMLSL, VPGSIWGLLLLFLGLTTRVI, GASLLIRFMAVLFVPVSVGII, and ILLVPNIVSTCVTLLVIGFLG.

It belongs to the UPF0299 family.

It is found in the cell inner membrane. In Haemophilus influenzae (strain PittEE), this protein is UPF0299 membrane protein CGSHiEE_04225.